The chain runs to 123 residues: Small ribosomal subunit protein bS16 (123 aa).

The interval 79–123 (AGIAKRPSRNNPTKGEPGKKAQERLALAKQAEEEAAAKAAEAASE) is disordered.

It belongs to the bacterial ribosomal protein bS16 family.

This is Small ribosomal subunit protein bS16 from Brucella melitensis biotype 2 (strain ATCC 23457).